A 414-amino-acid chain; its full sequence is Gamma-glutamyl phosphate reductase (414 aa).

Belongs to the gamma-glutamyl phosphate reductase family.

The protein resides in the cytoplasm. It carries out the reaction L-glutamate 5-semialdehyde + phosphate + NADP(+) = L-glutamyl 5-phosphate + NADPH + H(+). It participates in amino-acid biosynthesis; L-proline biosynthesis; L-glutamate 5-semialdehyde from L-glutamate: step 2/2. Its function is as follows. Catalyzes the NADPH-dependent reduction of L-glutamate 5-phosphate into L-glutamate 5-semialdehyde and phosphate. The product spontaneously undergoes cyclization to form 1-pyrroline-5-carboxylate. The protein is Gamma-glutamyl phosphate reductase of Xanthomonas axonopodis pv. citri (strain 306).